A 305-amino-acid chain; its full sequence is Ribosomal RNA small subunit methyltransferase H (305 aa).

S-adenosyl-L-methionine-binding positions include 30-32 (GGH), D49, F74, D96, and Q103.

Belongs to the methyltransferase superfamily. RsmH family.

The protein localises to the cytoplasm. It carries out the reaction cytidine(1402) in 16S rRNA + S-adenosyl-L-methionine = N(4)-methylcytidine(1402) in 16S rRNA + S-adenosyl-L-homocysteine + H(+). Its function is as follows. Specifically methylates the N4 position of cytidine in position 1402 (C1402) of 16S rRNA. In Francisella tularensis subsp. tularensis (strain FSC 198), this protein is Ribosomal RNA small subunit methyltransferase H.